The following is a 493-amino-acid chain: UDP-N-acetylmuramoyl-L-alanyl-D-glutamate--2,6-diaminopimelate ligase (493 aa).

Serine 30 contacts UDP-N-acetyl-alpha-D-muramoyl-L-alanyl-D-glutamate. An ATP-binding site is contributed by glycine 114 to serine 120. UDP-N-acetyl-alpha-D-muramoyl-L-alanyl-D-glutamate contacts are provided by residues threonine 156 to threonine 157, serine 183, glutamine 189, and arginine 191. An N6-carboxylysine modification is found at lysine 223. Meso-2,6-diaminopimelate is bound by residues arginine 386, aspartate 410–arginine 413, glycine 460, and glutamate 464. A Meso-diaminopimelate recognition motif motif is present at residues aspartate 410–arginine 413.

The protein belongs to the MurCDEF family. MurE subfamily. Mg(2+) is required as a cofactor. Post-translationally, carboxylation is probably crucial for Mg(2+) binding and, consequently, for the gamma-phosphate positioning of ATP.

The protein localises to the cytoplasm. The enzyme catalyses UDP-N-acetyl-alpha-D-muramoyl-L-alanyl-D-glutamate + meso-2,6-diaminopimelate + ATP = UDP-N-acetyl-alpha-D-muramoyl-L-alanyl-gamma-D-glutamyl-meso-2,6-diaminopimelate + ADP + phosphate + H(+). The protein operates within cell wall biogenesis; peptidoglycan biosynthesis. In terms of biological role, catalyzes the addition of meso-diaminopimelic acid to the nucleotide precursor UDP-N-acetylmuramoyl-L-alanyl-D-glutamate (UMAG) in the biosynthesis of bacterial cell-wall peptidoglycan. The polypeptide is UDP-N-acetylmuramoyl-L-alanyl-D-glutamate--2,6-diaminopimelate ligase (Chromobacterium violaceum (strain ATCC 12472 / DSM 30191 / JCM 1249 / CCUG 213 / NBRC 12614 / NCIMB 9131 / NCTC 9757 / MK)).